Here is a 207-residue protein sequence, read N- to C-terminus: Uracil phosphoribosyltransferase (207 aa).

Residues Arg77, Arg102, and 129–137 (DPMLATGGS) contribute to the 5-phospho-alpha-D-ribose 1-diphosphate site. Uracil-binding positions include Ile192 and 197–199 (GDA). Asp198 lines the 5-phospho-alpha-D-ribose 1-diphosphate pocket.

This sequence belongs to the UPRTase family. Mg(2+) serves as cofactor.

It catalyses the reaction UMP + diphosphate = 5-phospho-alpha-D-ribose 1-diphosphate + uracil. Its pathway is pyrimidine metabolism; UMP biosynthesis via salvage pathway; UMP from uracil: step 1/1. Allosterically activated by GTP. Its function is as follows. Catalyzes the conversion of uracil and 5-phospho-alpha-D-ribose 1-diphosphate (PRPP) to UMP and diphosphate. This is Uracil phosphoribosyltransferase from Mycoplasma mobile (strain ATCC 43663 / 163K / NCTC 11711) (Mesomycoplasma mobile).